We begin with the raw amino-acid sequence, 786 residues long: Rho GTPase-activating protein 10 (786 aa).

The region spanning Glu-7–Arg-262 is the BAR domain. The 108-residue stretch at Gln-265–Ala-372 folds into the PH domain. Positions Ala-389 to Phe-574 constitute a Rho-GAP domain. Disordered regions lie at residues Glu-584 to Arg-609 and Glu-622 to Leu-714. Over residues Gln-599–Arg-609 the composition is skewed to basic residues. Residues Pro-634–Ser-649 show a composition bias toward low complexity. A compositionally biased stretch (polar residues) spans Thr-673–Ala-701. Over residues Gly-702 to Leu-714 the composition is skewed to pro residues. In terms of domain architecture, SH3 spans Val-728–Leu-786.

Interacts with PKN3. Interacts with caspase-activated PAK2 proteolytic fragment PAK-2p34; the interaction does not affect ARHGAP10 GTPase activation activity towards RHOA and CDC42. Interacts via its SH3 domain with PTK2/FAK1. Interacts with PTK2B/PYK2; the interaction negatively regulates ARHGAP10 GTPase-activating activity. Interacts with MICAL1 and WDR44; complex formation might transit from GRAF2/ARHGAP10-MICAL1 to GRAF2/ARHGAP10-WDR44 complexes. In terms of processing, phosphorylated on tyrosine residues, probably involving PTK2B/PYK2. In terms of tissue distribution, high levels of expression in brain, testes, liver, heart and kidney.

It localises to the cytoplasm. The protein resides in the perinuclear region. The protein localises to the cell membrane. It is found in the endosome membrane. GTPase-activating protein that catalyzes the conversion of active GTP-bound Rho GTPases to their inactive GDP-bound form, thus suppressing various Rho GTPase-mediated cellular processes. Also converts Cdc42 to an inactive GDP-bound state. Essential for PTKB2 regulation of cytoskeletal organization via Rho family GTPases. Inhibits PAK2 proteolytic fragment PAK-2p34 kinase activity and changes its localization from the nucleus to the perinuclear region. Stabilizes PAK-2p34 thereby increasing stimulation of cell death. Associates with MICAL1 on the endosomal membrane to promote Rab8-Rab10-dependent tubule extension. After dissociation with MICAL1, recruits WDR44 which connects the endoplasmic reticulum (ER) with the endosomal tubule, thereby participating in the export of a subset of neosynthesized proteins. In Mus musculus (Mouse), this protein is Rho GTPase-activating protein 10 (Arhgap10).